A 170-amino-acid polypeptide reads, in one-letter code: Cyclic pyranopterin monophosphate synthase (170 aa).

Substrate-binding positions include 89-91 (LCH) and 125-126 (ME). D140 is a catalytic residue.

The protein belongs to the MoaC family. Homohexamer; trimer of dimers.

It carries out the reaction (8S)-3',8-cyclo-7,8-dihydroguanosine 5'-triphosphate = cyclic pyranopterin phosphate + diphosphate. It functions in the pathway cofactor biosynthesis; molybdopterin biosynthesis. Catalyzes the conversion of (8S)-3',8-cyclo-7,8-dihydroguanosine 5'-triphosphate to cyclic pyranopterin monophosphate (cPMP). This is Cyclic pyranopterin monophosphate synthase from Streptomyces avermitilis (strain ATCC 31267 / DSM 46492 / JCM 5070 / NBRC 14893 / NCIMB 12804 / NRRL 8165 / MA-4680).